We begin with the raw amino-acid sequence, 262 residues long: MKIALGIEYDGSRYFGWQRQDEVESVQQKLEEALSIVANAPIEVFCAGRTDSGVHGTGQVVHFETQAIRPLQSWCFGTNANLPDDIAVKWAVEVSEDFHARFSATARRYRYIIFNNKLRSAILPKGVSHYHYELDHQKMHEAGQFLLGENDFSSFRAAKCQSHTPWRNVHHLNVSRLGNYIVVDIQANAFVHHMVRNIVGSLIEVGQGRQPVEWIQWLLAQRDRTLAAPTAKAEGLYLVDVHYPERFGIPKTALGPLFLANN.

Asp51 acts as the Nucleophile in catalysis. Tyr109 provides a ligand contact to substrate.

Belongs to the tRNA pseudouridine synthase TruA family. Homodimer.

It carries out the reaction uridine(38/39/40) in tRNA = pseudouridine(38/39/40) in tRNA. Formation of pseudouridine at positions 38, 39 and 40 in the anticodon stem and loop of transfer RNAs. This is tRNA pseudouridine synthase A from Actinobacillus pleuropneumoniae serotype 7 (strain AP76).